We begin with the raw amino-acid sequence, 545 residues long: Chaperonin GroEL (545 aa).

Residues 30-33, lysine 51, 87-91, glycine 415, 479-481, and aspartate 495 each bind ATP; these read TLGP, DGTTT, and NAA. The tract at residues 526-545 is disordered; that stretch reads KEDKPDLGGAGGMGGMGGMM. Over residues 533–545 the composition is skewed to gly residues; that stretch reads GGAGGMGGMGGMM.

This sequence belongs to the chaperonin (HSP60) family. As to quaternary structure, forms a cylinder of 14 subunits composed of two heptameric rings stacked back-to-back. Interacts with the co-chaperonin GroES.

It localises to the cytoplasm. The catalysed reaction is ATP + H2O + a folded polypeptide = ADP + phosphate + an unfolded polypeptide.. In terms of biological role, together with its co-chaperonin GroES, plays an essential role in assisting protein folding. The GroEL-GroES system forms a nano-cage that allows encapsulation of the non-native substrate proteins and provides a physical environment optimized to promote and accelerate protein folding. This Sodalis glossinidius protein is Chaperonin GroEL.